Reading from the N-terminus, the 207-residue chain is Intraflagellar transport protein 43 homolog A (207 aa).

Positions 1–104 (MDDNLQLGDS…GSDDEGDIPV (104 aa)) are disordered.

Belongs to the IFT43 family. Component of IFT complex A.

Component of IFT complex A (IFT-A) involved in retrograde ciliary transport along microtubules from the ciliary tip to the base. The chain is Intraflagellar transport protein 43 homolog A (ift43a) from Salmo salar (Atlantic salmon).